The primary structure comprises 256 residues: Cell division protein DivIB (256 aa).

Over Met1–Lys23 the chain is Cytoplasmic. The chain crosses the membrane as a helical span at residues Ile24–Tyr44. Residues Phe45 to Arg113 form the POTRA domain. The Extracellular segment spans residues Phe45 to Lys256.

The protein belongs to the FtsQ/DivIB family. DivIB subfamily.

The protein localises to the cell membrane. In terms of biological role, cell division protein that may be involved in stabilizing or promoting the assembly of the division complex. This chain is Cell division protein DivIB, found in Clostridium botulinum (strain Loch Maree / Type A3).